A 1395-amino-acid polypeptide reads, in one-letter code: DNA polymerase II large subunit (1395 aa).

Disordered regions lie at residues 279–320 and 657–704; these read IGKD…PRVE and GNRM…MSDT. A compositionally biased stretch (acidic residues) spans 283–312; sequence EADEGDSAEDANGDDAGEGADDDGGDEADE. Composition is skewed to basic and acidic residues over residues 661 to 671 and 690 to 700; these read GRPEKSERRDL and DVAKATKHADD.

The protein belongs to the archaeal DNA polymerase II family. As to quaternary structure, heterodimer of a large subunit and a small subunit. Post-translationally, this protein undergoes a protein self splicing that involves a post-translational excision of the intervening region (intein) followed by peptide ligation.

The enzyme catalyses DNA(n) + a 2'-deoxyribonucleoside 5'-triphosphate = DNA(n+1) + diphosphate. It catalyses the reaction Exonucleolytic cleavage in the 3'- to 5'-direction to yield nucleoside 5'-phosphates.. Possesses two activities: a DNA synthesis (polymerase) and an exonucleolytic activity that degrades single-stranded DNA in the 3'- to 5'-direction. Has a template-primer preference which is characteristic of a replicative DNA polymerase. The polypeptide is DNA polymerase II large subunit (Haloarcula marismortui (strain ATCC 43049 / DSM 3752 / JCM 8966 / VKM B-1809) (Halobacterium marismortui)).